We begin with the raw amino-acid sequence, 153 residues long: AGAAEDLSKEQVQMLRKAFDMFDRDKKGVIHTNMVSTILRTLGQTFEEKDLKDLIAEIDQDGSGELEFEEFMALAARFLVEEDAEAMQEELREAFRLYDKQGQGFINVSDLRDILRALDDKLTEDELDEMIAEIDTDGSGTVDFDEFMEMMTG.

A1 is subject to Blocked amino end (Ala). EF-hand domains lie at 10-45 (EQVQ…LGQT), 46-81 (FEEK…FLVE), 86-121 (AMQE…LDDK), and 122-153 (LTED…MMTG). Ca(2+) contacts are provided by D59, D61, S63, E65, E70, D99, D110, D135, D137, S139, T141, and E146.

It belongs to the troponin C family.

In terms of biological role, troponin is the central regulatory protein of striated muscle contraction. Tn consists of three components: Tn-I which is the inhibitor of actomyosin ATPase, Tn-T which contains the binding site for tropomyosin and Tn-C. The binding of calcium to Tn-C abolishes the inhibitory action of Tn on actin filaments. The sequence is that of Troponin C from Tachypleus tridentatus (Japanese horseshoe crab).